The following is a 185-amino-acid chain: GTP cyclohydrolase 1 (185 aa).

Residues Cys75, His78, and Cys146 each coordinate Zn(2+).

This sequence belongs to the GTP cyclohydrolase I family. As to quaternary structure, toroid-shaped homodecamer, composed of two pentamers of five dimers.

It catalyses the reaction GTP + H2O = 7,8-dihydroneopterin 3'-triphosphate + formate + H(+). It functions in the pathway cofactor biosynthesis; 7,8-dihydroneopterin triphosphate biosynthesis; 7,8-dihydroneopterin triphosphate from GTP: step 1/1. This chain is GTP cyclohydrolase 1, found in Methylococcus capsulatus (strain ATCC 33009 / NCIMB 11132 / Bath).